A 426-amino-acid chain; its full sequence is Histidine--tRNA ligase (426 aa).

It belongs to the class-II aminoacyl-tRNA synthetase family. Homodimer.

It is found in the cytoplasm. It catalyses the reaction tRNA(His) + L-histidine + ATP = L-histidyl-tRNA(His) + AMP + diphosphate + H(+). This is Histidine--tRNA ligase from Streptococcus thermophilus (strain CNRZ 1066).